We begin with the raw amino-acid sequence, 444 residues long: MGGGGQQTDRITDTNGRFSSYTWEEVQKHTKHGDQWVVVERKVYNVSQWVKRHPGGLRILGHYAGEDATEAFTAFHPNLQLVRKYLKPLLIGELEASEPSQDRQKNAALVEDFRALRERLEAEGCFKTQPLFFALHLGHILLLEAIAFMMVWYFGTGWINTLIVAVILATAQSQAGWLQHDFGHLSVFKTSGMNHLVHKFVIGHLKGASAGWWNHRHFQHHAKPNIFKKDPDVNMLNAFVVGNVQPVEYGVKKIKHLPYNHQHKYFFFIGPPLLIPVYFQFQIFHNMISHGMWVDLLWCISYYVRYFLCYTQFYGVFWAIILFNFVRFMESHWFVWVTQMSHIPMNIDYEKNQDWLSMQLVATCNIEQSAFNDWFSGHLNFQIEHHLFPTVPRHNYWRAAPRVRALCEKYGVKYQEKTLYGAFADIIRSLEKSGELWLDAYLNK.

Residues 1-130 (MGGGGQQTDR…EAEGCFKTQP (130 aa)) are Cytoplasmic-facing. Residues 18–95 (FSSYTWEEVQ…LKPLLIGELE (78 aa)) form the Cytochrome b5 heme-binding domain. A helical membrane pass occupies residues 131–151 (LFFALHLGHILLLEAIAFMMV). Over 152 to 157 (WYFGTG) the chain is Lumenal. The chain crosses the membrane as a helical span at residues 158–178 (WINTLIVAVILATAQSQAGWL). Over 179 to 264 (QHDFGHLSVF…KHLPYNHQHK (86 aa)) the chain is Cytoplasmic. The Histidine box-1 motif lies at 180-184 (HDFGH). The short motif at 217 to 221 (HFQHH) is the Histidine box-2 element. Residues 265–285 (YFFFIGPPLLIPVYFQFQIFH) form a helical membrane-spanning segment. The Lumenal portion of the chain corresponds to 286 to 305 (NMISHGMWVDLLWCISYYVR). Residues 306-326 (YFLCYTQFYGVFWAIILFNFV) traverse the membrane as a helical segment. The Cytoplasmic segment spans residues 327–444 (RFMESHWFVW…ELWLDAYLNK (118 aa)). The Histidine box-3 signature appears at 382–386 (QIEHH).

It belongs to the fatty acid desaturase type 1 family.

It localises to the endoplasmic reticulum membrane. It carries out the reaction (9Z,12Z)-octadecadienoyl-CoA + 2 Fe(II)-[cytochrome b5] + O2 + 2 H(+) = (6Z,9Z,12Z)-octadecatrienoyl-CoA + 2 Fe(III)-[cytochrome b5] + 2 H2O. The catalysed reaction is (9Z,12Z,15Z)-octadecatrienoyl-CoA + 2 Fe(II)-[cytochrome b5] + O2 + 2 H(+) = (6Z,9Z,12Z,15Z)-octadecatetraenoyl-CoA + 2 Fe(III)-[cytochrome b5] + 2 H2O. It catalyses the reaction (8Z,11Z,14Z,17Z)-eicosatetraenoyl-CoA + 2 Fe(II)-[cytochrome b5] + O2 + 2 H(+) = (5Z,8Z,11Z,14Z,17Z)-eicosapentaenoyl-CoA + 2 Fe(III)-[cytochrome b5] + 2 H2O. The enzyme catalyses (8Z,11Z,14Z)-eicosatrienoyl-CoA + 2 Fe(II)-[cytochrome b5] + O2 + 2 H(+) = (5Z,8Z,11Z,14Z)-eicosatetraenoyl-CoA + 2 Fe(III)-[cytochrome b5] + 2 H2O. Its pathway is lipid metabolism; polyunsaturated fatty acid biosynthesis. In terms of biological role, fatty acid desaturase with bifunctional delta-5 and delta-6 activities. Component of a lipid metabolic pathway that catalyzes the biosynthesis of polyunsaturated fatty acids (PUFA) with preference toward n-3 substrates and Delta-6 function. In Danio rerio (Zebrafish), this protein is Acyl-CoA 6-desaturase (fads2).